Reading from the N-terminus, the 67-residue chain is Probable Sec-independent protein translocase protein TatE (67 aa).

Residues 1 to 21 form a helical membrane-spanning segment; it reads MEGISLAKLLIVGALIVLLFG. Residues 43–67 form a disordered region; it reads MNDDSDATSKTASEDKNAGQAVHKE. The segment covering 54 to 67 has biased composition (basic and acidic residues); sequence ASEDKNAGQAVHKE.

Belongs to the TatA/E family. TatE subfamily.

Its subcellular location is the cell inner membrane. In terms of biological role, part of the twin-arginine translocation (Tat) system that transports large folded proteins containing a characteristic twin-arginine motif in their signal peptide across membranes. TatE shares overlapping functions with TatA. This is Probable Sec-independent protein translocase protein TatE from Erwinia tasmaniensis (strain DSM 17950 / CFBP 7177 / CIP 109463 / NCPPB 4357 / Et1/99).